Consider the following 151-residue polypeptide: Phosphopantetheine adenylyltransferase (151 aa).

Serine 9 lines the substrate pocket. ATP is bound by residues 9-10 (SF) and histidine 17. Residues lysine 41, threonine 73, and arginine 87 each coordinate substrate. ATP-binding positions include 88–90 (GLR), glutamate 98, and 122–128 (KAHISST).

It belongs to the bacterial CoaD family. Homohexamer. The cofactor is Mg(2+).

The protein resides in the cytoplasm. It carries out the reaction (R)-4'-phosphopantetheine + ATP + H(+) = 3'-dephospho-CoA + diphosphate. It participates in cofactor biosynthesis; coenzyme A biosynthesis; CoA from (R)-pantothenate: step 4/5. Reversibly transfers an adenylyl group from ATP to 4'-phosphopantetheine, yielding dephospho-CoA (dPCoA) and pyrophosphate. The protein is Phosphopantetheine adenylyltransferase of Christiangramia forsetii (strain DSM 17595 / CGMCC 1.15422 / KT0803) (Gramella forsetii).